Consider the following 927-residue polypeptide: Huntington interacting protein related 1 (927 aa).

Positions 7 to 136 (AREVFVRAQL…TFHNKYPVVP (130 aa)) constitute an ENTH domain. The stretch at 336-524 (RAVEDEKFAK…RESHANQLVQ (189 aa)) forms a coiled coil. The region spanning 673–914 (QTDIDKDVVG…ALRKQHYHMA (242 aa)) is the I/LWEQ domain.

It belongs to the SLA2 family.

The protein resides in the cytoplasm. It localises to the cytoskeleton. Its function is as follows. Regulates pre-synaptic vesicle recycling at neuromuscular junctions of mechanosensory neurons. Plays a role in maintaining a normal defecation cycle. The polypeptide is Huntington interacting protein related 1 (hipr-1) (Caenorhabditis elegans).